Consider the following 324-residue polypeptide: MKVTVLGAAGGIGQTLSLLLKLRLPAGADLALYDISPVTPGIAVDISHIPTSVNAIGYAGEDPSVALKDPSVALKDTNLVIITAGIARKPGMTRADLFNINAGIVKDLVEKVAEVCPMACIGIVTNPVNTLVPIAAEVLRKAGVYDKSKLFGVTTLDVVRAKTFVSELKHKNVETVTVPVVGGHSGTTILPLLSQALAEGRLLDFSQTEIESLTQRIKNAGTEVVEAKAGGGSATLSMAESGARFALAVFKALLGEDCVRYAYVQSKEGSGYPEFFAHPVRFGLKGIEEILPIAPLNEYEQTQFEELKPILEADIELGKKFVNP.

NAD(+) contacts are provided by residues 7–13 and Asp34; that span reads GAAGGIG. Residues Arg88 and Arg94 each contribute to the substrate site. Residues Asn101 and 124-126 each bind NAD(+); that span reads VTN. 2 residues coordinate substrate: Asn126 and Arg160. The Proton acceptor role is filled by His184. Met238 lines the NAD(+) pocket.

The protein belongs to the LDH/MDH superfamily. MDH type 1 family. In terms of assembly, homodimer.

The enzyme catalyses (S)-malate + NAD(+) = oxaloacetate + NADH + H(+). Catalyzes the reversible oxidation of malate to oxaloacetate. In Haemophilus ducreyi (strain 35000HP / ATCC 700724), this protein is Malate dehydrogenase.